A 191-amino-acid polypeptide reads, in one-letter code: Signal peptidase IB (191 aa).

Topologically, residues 1 to 7 (MKKEILE) are cytoplasmic. The helical transmembrane segment at 8 to 28 (WIISIAVAFVILFIVGKFIVT) threads the bilayer. At 29–191 (PYTIKGESMD…HNFNPENTKN (163 aa)) the chain is on the extracellular side. Catalysis depends on residues Ser-36 and Lys-77.

Belongs to the peptidase S26 family.

It localises to the cell membrane. It carries out the reaction Cleavage of hydrophobic, N-terminal signal or leader sequences from secreted and periplasmic proteins.. Functionally, essential for cell viability. In Staphylococcus aureus (strain COL), this protein is Signal peptidase IB (spsB).